We begin with the raw amino-acid sequence, 928 residues long: cGMP-dependent 3',5'-cyclic phosphodiesterase (928 aa).

Ser109 is modified (phosphoserine). Residues 188–210 form a disordered region; that stretch reads RRPEAVQNTSADPSEDQKDEKGY. 2 consecutive GAF domains span residues 228–365 and 397–536; these read DATS…GTVL and DVSV…GISI. 3',5'-cyclic GMP is bound by residues Ser419, Asp434, Ile453, Tyr476, and Thr487. The PDEase domain occupies 566–890; that stretch reads SDDEYTKLLH…EHWTKVSHKF (325 aa). His644 (proton donor) is an active-site residue. Residues His648, His684, Asp685, and Asp796 each contribute to the Zn(2+) site. Asp685 provides a ligand contact to Mg(2+).

Belongs to the cyclic nucleotide phosphodiesterase family. PDE2 subfamily. In terms of assembly, homodimer. Requires Zn(2+) as cofactor. The cofactor is Mg(2+). As to expression, expressed in brain and liver.

It is found in the cell membrane. The protein resides in the cytoplasm. It localises to the mitochondrion matrix. The protein localises to the mitochondrion inner membrane. Its subcellular location is the mitochondrion outer membrane. The catalysed reaction is a nucleoside 3',5'-cyclic phosphate + H2O = a nucleoside 5'-phosphate + H(+). It carries out the reaction 3',5'-cyclic GMP + H2O = GMP + H(+). It catalyses the reaction 3',5'-cyclic AMP + H2O = AMP + H(+). Its activity is regulated as follows. The 3',5'-cyclic-AMP phosphodiesterase activity is stimulated by 3',5'-cyclic GMP. Specifically inhibited by Bay 60-7550. When repressed, protected from ionomycin- but not staurosporin-induced cell death. In terms of biological role, cGMP-activated cyclic nucleotide phosphodiesterase with a dual-specificity for the second messengers cAMP and cGMP, which are key regulators of many important physiological processes. Has a higher efficiency with cGMP compared to cAMP. Plays a role in cell growth and migration. Regulates mitochondrial cAMP levels and respiration. Involved in the regulation of mitochondria morphology/dynamics and apoptotic cell death via local modulation of cAMP/PKA signaling in the mitochondrion, including the monitoring of local cAMP levels at the outer mitochondrial membrane and of PKA-dependent phosphorylation of Dnm1l. This is cGMP-dependent 3',5'-cyclic phosphodiesterase from Rattus norvegicus (Rat).